A 369-amino-acid polypeptide reads, in one-letter code: Queuine tRNA-ribosyltransferase (369 aa).

The Proton acceptor role is filled by D89. Substrate-binding positions include 89–93, D142, Q184, and G211; that span reads DSGGF. Positions 242 to 248 are RNA binding; sequence GGGSPEL. D261 (nucleophile) is an active-site residue. Residues 266–270 form an RNA binding; important for wobble base 34 recognition region; it reads TRIAR. C299, C301, C304, and H330 together coordinate Zn(2+).

It belongs to the queuine tRNA-ribosyltransferase family. In terms of assembly, homodimer. Within each dimer, one monomer is responsible for RNA recognition and catalysis, while the other monomer binds to the replacement base PreQ1. Requires Zn(2+) as cofactor.

It carries out the reaction 7-aminomethyl-7-carbaguanine + guanosine(34) in tRNA = 7-aminomethyl-7-carbaguanosine(34) in tRNA + guanine. Its pathway is tRNA modification; tRNA-queuosine biosynthesis. Catalyzes the base-exchange of a guanine (G) residue with the queuine precursor 7-aminomethyl-7-deazaguanine (PreQ1) at position 34 (anticodon wobble position) in tRNAs with GU(N) anticodons (tRNA-Asp, -Asn, -His and -Tyr). Catalysis occurs through a double-displacement mechanism. The nucleophile active site attacks the C1' of nucleotide 34 to detach the guanine base from the RNA, forming a covalent enzyme-RNA intermediate. The proton acceptor active site deprotonates the incoming PreQ1, allowing a nucleophilic attack on the C1' of the ribose to form the product. After dissociation, two additional enzymatic reactions on the tRNA convert PreQ1 to queuine (Q), resulting in the hypermodified nucleoside queuosine (7-(((4,5-cis-dihydroxy-2-cyclopenten-1-yl)amino)methyl)-7-deazaguanosine). This chain is Queuine tRNA-ribosyltransferase, found in Thermotoga maritima (strain ATCC 43589 / DSM 3109 / JCM 10099 / NBRC 100826 / MSB8).